A 263-amino-acid polypeptide reads, in one-letter code: Small ribosomal subunit protein uS2 (263 aa).

The protein belongs to the universal ribosomal protein uS2 family.

This is Small ribosomal subunit protein uS2 from Hyphomonas neptunium (strain ATCC 15444).